Here is a 1804-residue protein sequence, read N- to C-terminus: Obscurin-like protein 1 (1804 aa).

A Phosphoserine modification is found at Ser-10. 4 consecutive Ig-like domains span residues 12–100, 128–225, 241–330, and 339–425; these read PCFL…AAVT, PKFL…ALLQ, PKPV…QTLS, and PRLR…ANVT. The tract at residues 17–19 is interaction with TTN; that stretch reads FPR. A disulfide bond links Cys-33 and Cys-84. The segment at 85–94 is interaction with TTN; the sequence is RARNAAGEAY. Cysteines 149 and 209 form a disulfide. The disordered stretch occupies residues 227 to 249; it reads HQPRESPPQDPDENPKPVLEPLK. Intrachain disulfides connect Cys-267-Cys-319 and Cys-362-Cys-412. The Fibronectin type-III domain maps to 517–615; the sequence is PPGPPVMVEM…FNGSAHLVPT (99 aa). Ig-like domains follow at residues 720-800, 804-891, 902-982, 986-1075, 1078-1165, 1176-1261, 1266-1442, 1536-1621, 1625-1694, and 1702-1798; these read PQDK…FGVT, PPVH…FTVT, PSSE…FTIT, PPVR…VTVT, PERI…FNVS, PEAA…FNVQ, PPVK…ARLS, PVTI…ARLT, REVS…EDTG, and PAQS…ADTQ. Disulfide bonds link Cys-738-Cys-788, Cys-829-Cys-879, Cys-920-Cys-970, Cys-1011-Cys-1061, Cys-1103-Cys-1153, Cys-1195-Cys-1245, Cys-1289-Cys-1430, and Cys-1558-Cys-1608.

Component of the 3M complex, composed of core components CUL7, CCDC8 and OBSL1. Interacts with CCDC8. Interacts with CUL7; the interaction is direct. Interacts with FBXW8. Interacts (via N-terminal Ig-like domain) with TTN/titin (via C-terminal Ig-like domain); the interaction is direct.

It localises to the cytoplasm. The protein resides in the perinuclear region. It is found in the golgi apparatus. In terms of biological role, core component of the 3M complex, a complex required to regulate microtubule dynamics and genome integrity. It is unclear how the 3M complex regulates microtubules, it could act by controlling the level of a microtubule stabilizer. Acts as a regulator of the Cul7-RING(FBXW8) ubiquitin-protein ligase, playing a critical role in the ubiquitin ligase pathway that regulates Golgi morphogenesis and dendrite patterning in brain. Required to localize CUL7 to the Golgi apparatus in neurons. In Mus musculus (Mouse), this protein is Obscurin-like protein 1 (Obsl1).